A 160-amino-acid polypeptide reads, in one-letter code: MSDSPTTAHTRLELPIDIIRIQALLPHRYPFLLVDRILELDQKQKRIVAQKNVSINEPFFQGHFPEHPVMPGVLIIEALAQAGGVMTQLNLSHNGHSSLLFYMVRVDNARFNKQVVPGDILILDMTMKRRIRNMGCYYGEARVNGEVVACADIMCAGVKS.

Histidine 63 is a catalytic residue.

The protein belongs to the thioester dehydratase family. FabZ subfamily.

The protein localises to the cytoplasm. It catalyses the reaction a (3R)-hydroxyacyl-[ACP] = a (2E)-enoyl-[ACP] + H2O. Its function is as follows. Involved in unsaturated fatty acids biosynthesis. Catalyzes the dehydration of short chain beta-hydroxyacyl-ACPs and long chain saturated and unsaturated beta-hydroxyacyl-ACPs. In Xylella fastidiosa (strain M23), this protein is 3-hydroxyacyl-[acyl-carrier-protein] dehydratase FabZ.